The primary structure comprises 116 residues: Iron-sulfur cluster insertion protein ErpA (116 aa).

The iron-sulfur cluster site is built by Cys-44, Cys-108, and Cys-110.

The protein belongs to the HesB/IscA family. As to quaternary structure, homodimer. It depends on iron-sulfur cluster as a cofactor.

Required for insertion of 4Fe-4S clusters for at least IspG. In Francisella tularensis subsp. mediasiatica (strain FSC147), this protein is Iron-sulfur cluster insertion protein ErpA.